Reading from the N-terminus, the 177-residue chain is MNIPQPVSLNIDALFRNLATGLNQRMAEQERNKPAMIGIHTGGVWVAERLLNQLDNLVSDPLGVLNIAYYRDDFTRIGMHPQVQPSQLPFSVADRHIILVDDVLYTGRTVRAALNEIFDYGRPASVTLAALVERAGRELPIQADVVGHHLDLAPNEQVKLTGPDPLQFSIQYIDPTE.

Positions 97 to 109 (IILVDDVLYTGRT) match the PRPP-binding motif.

Belongs to the purine/pyrimidine phosphoribosyltransferase family. PyrR subfamily.

It carries out the reaction UMP + diphosphate = 5-phospho-alpha-D-ribose 1-diphosphate + uracil. Its function is as follows. Regulates the transcription of the pyrimidine nucleotide (pyr) operon in response to exogenous pyrimidines. In terms of biological role, also displays a weak uracil phosphoribosyltransferase activity which is not physiologically significant. In Nitrosococcus oceani (strain ATCC 19707 / BCRC 17464 / JCM 30415 / NCIMB 11848 / C-107), this protein is Bifunctional protein PyrR.